Here is a 1049-residue protein sequence, read N- to C-terminus: Desmoglein-1 (1049 aa).

Positions 1-23 (MDWSFFRVVAMLFIFLVVVEVNS) are cleaved as a signal peptide. The propeptide occupies 24–49 (EFRIQVRDYNTKNGTIKWHSIRRQKR). 3 N-linked (GlcNAc...) asparagine glycosylation sites follow: asparagine 36, asparagine 110, and asparagine 180. Cadherin domains are found at residues 50 to 158 (EWIK…PVFS), 159 to 270 (MATF…PYME), 271 to 385 (QSSY…GPVF), and 386 to 497 (RPGS…TEPN). The Extracellular portion of the chain corresponds to 50–548 (EWIKFAAACR…LLSDNVHFGP (499 aa)). The interval 485-534 (SFGNDDRTNTEPNTKITTNTGRQESTSSTNYDTSTTSTDSSQVYSSEPGN) is disordered. The span at 494–508 (TEPNTKITTNTGRQE) shows a compositional bias: polar residues. Residues 509–530 (STSSTNYDTSTTSTDSSQVYSS) are compositionally biased toward low complexity. The helical transmembrane segment at 549-569 (AGIGLLIMGFLVLGLVPFLMI) threads the bilayer. Residues 570-1049 (CCDCGGAPRS…TKYSTVQYSK (480 aa)) are Cytoplasmic-facing. Position 579 is a phosphoserine (serine 579). 5 Desmoglein repeat repeats span residues 813 to 839 (TYPSGPGVLHPKPILDPLGYGNVTVTE), 840 to 869 (SYTTSDTLKPSVHVHDNRPASNVVVTERVV), 870 to 899 (GPISGADLHGMLEMPDLRDGSNVIVTERVI), 900 to 927 (APSSSLPTSLTIHHPRESSNVVVTERVI), and 928 to 956 (QPTSGMIGSLSMHPELANAHNVIVTERVV). Residues 1014–1035 (HMRSSSDHHFNQTIGSASPSTA) are disordered. The segment covering 1024-1035 (NQTIGSASPSTA) has biased composition (polar residues).

Binds to JUP/plakoglobin. Interacts with PKP2. Interacts with DSC3; there is evidence to suggest that the interaction promotes cell-cell adhesion of keratinocytes. As to quaternary structure, (Microbial infection) Interacts with Staphylococcus aureus protein SdrD; this interaction increases S.aureus adherence to keratinocytes. Expressed in all suprabasal layers of the epidermis, with the highest expression seen in the granular layer (at protein level).

It localises to the cell membrane. It is found in the cell junction. The protein resides in the desmosome. Its subcellular location is the cytoplasm. The protein localises to the nucleus. Its function is as follows. Component of intercellular desmosome junctions. Involved in the interaction of plaque proteins and intermediate filaments mediating cell-cell adhesion. The polypeptide is Desmoglein-1 (DSG1) (Homo sapiens (Human)).